The primary structure comprises 238 residues: Small ribosomal subunit protein uS2c (238 aa).

The protein belongs to the universal ribosomal protein uS2 family.

Its subcellular location is the plastid. The protein resides in the chloroplast. This Jasminum nudiflorum (Winter jasmine) protein is Small ribosomal subunit protein uS2c (rps2).